The following is a 304-amino-acid chain: Probable alpha-L-glutamate ligase 2 (304 aa).

An ATP-grasp domain is found at 107 to 290 (HQLLARKGVG…IAGAIIDYIV (184 aa)). Residues lysine 144, 181–182 (EF), aspartate 190, and 214–216 (RSN) contribute to the ATP site. Residues aspartate 251, glutamate 263, and asparagine 265 each coordinate Mg(2+). Aspartate 251, glutamate 263, and asparagine 265 together coordinate Mn(2+).

It belongs to the RimK family. Requires Mg(2+) as cofactor. It depends on Mn(2+) as a cofactor.

This chain is Probable alpha-L-glutamate ligase 2, found in Hahella chejuensis (strain KCTC 2396).